The chain runs to 64 residues: MSKIKFKTKSALKKRIKVTGTGKVKHGHAYRSHLAQSKTTKQKRQSRKSTLMNNSDFKRLKKLI.

The segment covering 22–31 (GKVKHGHAYR) has biased composition (basic residues). A disordered region spans residues 22–64 (GKVKHGHAYRSHLAQSKTTKQKRQSRKSTLMNNSDFKRLKKLI).

Belongs to the bacterial ribosomal protein bL35 family.

The sequence is that of Large ribosomal subunit protein bL35 from Mesomycoplasma hyopneumoniae (strain 232) (Mycoplasma hyopneumoniae).